Reading from the N-terminus, the 137-residue chain is ATP synthase epsilon chain (137 aa).

This sequence belongs to the ATPase epsilon chain family. As to quaternary structure, F-type ATPases have 2 components, CF(1) - the catalytic core - and CF(0) - the membrane proton channel. CF(1) has five subunits: alpha(3), beta(3), gamma(1), delta(1), epsilon(1). CF(0) has three main subunits: a, b and c.

The protein resides in the cellular thylakoid membrane. Produces ATP from ADP in the presence of a proton gradient across the membrane. This chain is ATP synthase epsilon chain, found in Synechococcus sp. (strain JA-2-3B'a(2-13)) (Cyanobacteria bacterium Yellowstone B-Prime).